Here is a 700-residue protein sequence, read N- to C-terminus: Elongation factor G (700 aa).

Residues 8–290 (ERYRNIGISA…AVIDYLPAPT (283 aa)) form the tr-type G domain. GTP is bound by residues 17-24 (AHIDAGKT), 88-92 (DTPGH), and 142-145 (NKMD).

The protein belongs to the TRAFAC class translation factor GTPase superfamily. Classic translation factor GTPase family. EF-G/EF-2 subfamily.

The protein localises to the cytoplasm. Its function is as follows. Catalyzes the GTP-dependent ribosomal translocation step during translation elongation. During this step, the ribosome changes from the pre-translocational (PRE) to the post-translocational (POST) state as the newly formed A-site-bound peptidyl-tRNA and P-site-bound deacylated tRNA move to the P and E sites, respectively. Catalyzes the coordinated movement of the two tRNA molecules, the mRNA and conformational changes in the ribosome. The chain is Elongation factor G (fusA) from Pasteurella multocida (strain Pm70).